The following is a 203-amino-acid chain: Superoxide dismutase [Mn/Fe] (203 aa).

His27, His81, Asp163, and His167 together coordinate Fe(3+). His27, His81, Asp163, and His167 together coordinate Mn(2+).

The protein belongs to the iron/manganese superoxide dismutase family. Requires Mn(2+) as cofactor. Fe(3+) is required as a cofactor.

The enzyme catalyses 2 superoxide + 2 H(+) = H2O2 + O2. Destroys superoxide anion radicals which are normally produced within the cells and which are toxic to biological systems. Catalyzes the dismutation of superoxide anion radicals into O2 and H2O2 by successive reduction and oxidation of the transition metal ion at the active site. This Streptococcus mutans serotype c (strain ATCC 700610 / UA159) protein is Superoxide dismutase [Mn/Fe] (sodA).